The following is a 287-amino-acid chain: Eukaryotic translation initiation factor 3 subunit G (287 aa).

The tract at residues 163-207 (EEDLESKEKDTKLGPTVPGSGKYVAPGMRGDRPAVTGGAERRSEE) is disordered. The region spanning 208–286 (NTCRVTNLPE…LVLKVEWTRF (79 aa)) is the RRM domain.

The protein belongs to the eIF-3 subunit G family. Component of the eukaryotic translation initiation factor 3 (eIF-3) complex.

The protein localises to the cytoplasm. Functionally, RNA-binding component of the eukaryotic translation initiation factor 3 (eIF-3) complex, which is involved in protein synthesis of a specialized repertoire of mRNAs and, together with other initiation factors, stimulates binding of mRNA and methionyl-tRNAi to the 40S ribosome. The eIF-3 complex specifically targets and initiates translation of a subset of mRNAs involved in cell proliferation. This subunit can bind 18S rRNA. The protein is Eukaryotic translation initiation factor 3 subunit G of Brugia malayi (Filarial nematode worm).